A 266-amino-acid polypeptide reads, in one-letter code: ATP synthase subunit a (266 aa).

The next 5 membrane-spanning stretches (helical) occupy residues 33 to 53, 95 to 115, 141 to 161, 206 to 226, and 237 to 257; these read FWTL…LFLA, VIAP…LMDL, DVNI…FYSI, LFGN…LLPW, and AIFH…LTIV.

Belongs to the ATPase A chain family. F-type ATPases have 2 components, CF(1) - the catalytic core - and CF(0) - the membrane proton channel. CF(1) has five subunits: alpha(3), beta(3), gamma(1), delta(1), epsilon(1). CF(0) has three main subunits: a(1), b(2) and c(9-12). The alpha and beta chains form an alternating ring which encloses part of the gamma chain. CF(1) is attached to CF(0) by a central stalk formed by the gamma and epsilon chains, while a peripheral stalk is formed by the delta and b chains.

It is found in the cell inner membrane. In terms of biological role, key component of the proton channel; it plays a direct role in the translocation of protons across the membrane. This chain is ATP synthase subunit a, found in Klebsiella pneumoniae subsp. pneumoniae (strain ATCC 700721 / MGH 78578).